The following is a 436-amino-acid chain: 3-ketoacyl-CoA thiolase (436 aa).

The active-site Acyl-thioester intermediate is Cys99. Residues His392 and Cys422 each act as proton acceptor in the active site.

The protein belongs to the thiolase-like superfamily. Thiolase family. In terms of assembly, heterotetramer of two alpha chains (FadJ) and two beta chains (FadI).

It is found in the cytoplasm. The catalysed reaction is an acyl-CoA + acetyl-CoA = a 3-oxoacyl-CoA + CoA. It participates in lipid metabolism; fatty acid beta-oxidation. Its function is as follows. Catalyzes the final step of fatty acid oxidation in which acetyl-CoA is released and the CoA ester of a fatty acid two carbons shorter is formed. This is 3-ketoacyl-CoA thiolase from Salmonella typhi.